A 261-amino-acid chain; its full sequence is Beta cell expansion factor A (261 aa).

An N-terminal signal peptide occupies residues 1-21 (MNKRNWLLALSLSLAFSPCYA). Residues 99–261 (KTAKEARIAI…IDKDLTETSR (163 aa)) are SYLF domain.

The protein resides in the secreted. It is found in the host. Stimulates the proliferation of insulin-producing beta cells during development in gnotobiotic zebrafish and mice. BefA is a microbiome-derived protein that traffics from the host intestinal lumen to the pancreas to act directly on pancreatic islets. In pancreas, interacts directly with host beta cells and elicits their proliferation via a mechanism of increasing membrane permeabilization. Can also permeabilize bacterial cell membranes, but does not show killing of target bacteria. This chain is Beta cell expansion factor A, found in Aeromonas veronii.